Reading from the N-terminus, the 240-residue chain is Transmembrane emp24 domain-containing protein 6 (240 aa).

The first 21 residues, 1 to 21, serve as a signal peptide directing secretion; the sequence is MFPLLFVAGLVVLNLVSSARS. At 22–200 the chain is on the lumenal side; the sequence is QKTEPLSGTG…FFLLQSNYNY (179 aa). Residues 53–138 form the GOLD domain; it reads TECFWQFAHQ…SVQVYLNFGV (86 aa). Asparagine 107 and asparagine 156 each carry an N-linked (GlcNAc...) asparagine glycan. The helical transmembrane segment at 201–223 threads the bilayer; that stretch reads VNWWSTAQSLVIVLSGILQLYFL. The Cytoplasmic portion of the chain corresponds to 224 to 240; that stretch reads KRLFNTPMTTETQKPRC.

It belongs to the EMP24/GP25L family.

The protein localises to the endoplasmic reticulum membrane. In Bos taurus (Bovine), this protein is Transmembrane emp24 domain-containing protein 6 (TMED6).